A 267-amino-acid chain; its full sequence is Small ribosomal subunit protein uS2 (267 aa).

Residues 237 to 267 form a disordered region; that stretch reads IGESAAAPSEPALETASAEATAEGEQPGSQA. Residues 238 to 261 show a composition bias toward low complexity; it reads GESAAAPSEPALETASAEATAEGE.

It belongs to the universal ribosomal protein uS2 family.

The sequence is that of Small ribosomal subunit protein uS2 from Chelativorans sp. (strain BNC1).